A 452-amino-acid chain; its full sequence is MLGVDEIIQTIKMIQEENLDIRTITMGVSLLDCAASDPVAVCDKVHRKVTRLAGRLVEIGNEIEREYGIPIVNKRIAVTPVALIIGEMGRDGCLALARTLDRAAAEVGVNFIGGYSTLVHKGFTRGDRELIASLPEALAATERVCASVNVATSKAGINMDAVRLMGAVIKETAARTADRSAIGCAKLVVFANAPEDNPFMAGAFHGVGEPECVINVGVSGPGVVKNAVARLPDADLGALAEEIKKTAFKITRMGELVGRETAKRLGVPFGIVDLSLAPTPAVGDSVAEIIEALGVEACGAPGTTAALALLNDAVKKGGAMASSRVGGLSGAFIPVSEDAGMIRAVAAGALGLDKLEAMTAVCSVGIDMVALPGDTSAETIAALIADEITIGVVNHKTTAVRLIPVPGKRAGEFVEFGGLLGRTPIMEVNHFGAAKFVHRGGRIPAPISSLNN.

The protein belongs to the UPF0210 family. In terms of assembly, homodimer.

The protein is UPF0210 protein Daud_1353 of Desulforudis audaxviator (strain MP104C).